The chain runs to 234 residues: Triosephosphate isomerase (234 aa).

8 to 10 (NFK) is a substrate binding site. H90 functions as the Electrophile in the catalytic mechanism. E159 functions as the Proton acceptor in the catalytic mechanism. Residues G165 and S197 each coordinate substrate.

This sequence belongs to the triosephosphate isomerase family. Homodimer.

Its subcellular location is the cytoplasm. It catalyses the reaction D-glyceraldehyde 3-phosphate = dihydroxyacetone phosphate. Its pathway is carbohydrate biosynthesis; gluconeogenesis. It participates in carbohydrate degradation; glycolysis; D-glyceraldehyde 3-phosphate from glycerone phosphate: step 1/1. Involved in the gluconeogenesis. Catalyzes stereospecifically the conversion of dihydroxyacetone phosphate (DHAP) to D-glyceraldehyde-3-phosphate (G3P). This chain is Triosephosphate isomerase, found in Helicobacter acinonychis (strain Sheeba).